Here is a 504-residue protein sequence, read N- to C-terminus: Pyrichalasin C-7 hydroxylase (504 aa).

A signal peptide spans methionine 1–glycine 17. Cysteine 449 is a heme binding site.

This sequence belongs to the cytochrome P450 family. It depends on heme as a cofactor.

The protein operates within mycotoxin biosynthesis. Its function is as follows. Cytochrome P450 monooxygenase; part of the gene cluster that mediates the biosynthesis of the mycotoxin pyrichalasin H, a tyrosine-derived cytochalasan that inhibits the growth of rice seedlings, but also inhibits lymphocyte capping and actin polymerization and alters cell morphology. Pyrichalasin H is indicated as the responsible agent for the genus-specific pathogenicity of M.grisea toward crabgrass. The first step in the pathway is catalyzed by the O-methyltransferase pyiA which methylates free tyrosine to generate the precursor O-methyltyrosine. The hybrid PKS-NRPS pyiS, assisted by the enoyl reductase pyiC, are responsible for fusion of the O-methyltyrosine precursor and the polyketide backbone. The polyketide synthase module (PKS) of pyiS is responsible for the synthesis of the polyketide backbone and the downstream nonribosomal peptide synthetase (NRPS) amidates the carboxyl end of the polyketide with the O-methyltyrosine precursor. As the NRPS A-domain demonstrates substrate tolerance, pyiS can also use phenylalanine, tyrosine and even para-chlorophenylalanine as amino acid precursor, which leads to the production of novel cytochalasans, including halogenated cytochalasans. Because pyiS lacks a designated enoylreductase (ER) domain, the required activity is provided the enoyl reductase pyiC. Reduction by the hydrolyase pyiE leads to 1,5-dihydropyrrolone, which is substrate for dehydration and intra-molecular Diels-Alder cyclization by the Diels-Alderase pyiF to yield the required isoindolone-fused macrocycle. The tailoring cytochrome P450 monooxygenases piyD and piyG catalyze the hydroxylation at C-18 and C-7, respectivily, whereas the short-chain dehydrogenase/reductase pyiH reduces the carbonyl at C-21 in preparation for the transfer of an acetyl group by the acetyltransferase pyiB. These 3 reactions whose order is not clear yet, lead to the production of O-methylpyrichalasin J, a deacetylated pyrichalasin H. Finally, pyiB to converts O-methylpyrichalasin J into the final product pyrichalasin H via acetylation of C-21. The sequence is that of Pyrichalasin C-7 hydroxylase from Pyricularia grisea (Crabgrass-specific blast fungus).